The sequence spans 285 residues: MHIKKKYWLLLPFFLLMTIFFIIPMAWIIVSGLQSEDGASISQKYEPLVSGLGFFNSFWTSLWISIVTVIVALLFSFPFCYFLSQSKNKIFKAFVISIATVPIWSSFLIKLIGLKTLLDLLIGLSLNRVGDNNLTFGSGYTLLGTIYLFTPFMFLPLYNHFCVLPKNLLLASQDLGYNWIYSFVKVVIPFSKTAMLSGIALTFFPALTSVAIAQFLDNSNQAETLGNYIFTLGNNGYDSAIERGRAAGAIIIAALITFAIYFTVVFLPKIVRIVHNKWKQHEKAF.

6 consecutive transmembrane segments (helical) span residues 10 to 30, 62 to 82, 94 to 114, 136 to 156, 196 to 216, and 247 to 267; these read LLPFFLLMTIFFIIPMAWIIV, LWISIVTVIVALLFSFPFCYF, FVISIATVPIWSSFLIKLIGL, FGSGYTLLGTIYLFTPFMFLP, LSGIALTFFPALTSVAIAQFL, and AGAIIIAALITFAIYFTVVFL. The ABC transmembrane type-1 domain maps to 58 to 268; the sequence is FWTSLWISIV…AIYFTVVFLP (211 aa).

It belongs to the binding-protein-dependent transport system permease family. CysTW subfamily.

The protein resides in the cell membrane. Its function is as follows. Required for the activity of the bacterial transport system of putrescine and spermidine. The polypeptide is Spermidine/putrescine transport system permease protein PotB homolog (potB) (Mycoplasma genitalium (strain ATCC 33530 / DSM 19775 / NCTC 10195 / G37) (Mycoplasmoides genitalium)).